The sequence spans 181 residues: Isopentenyl-diphosphate Delta-isomerase (181 aa).

2 residues coordinate Mn(2+): H29 and H36. The 134-residue stretch at 34 to 167 (PLHLAFSCYL…GWAISPWAAE (134 aa)) folds into the Nudix hydrolase domain. Residue C71 is part of the active site. H73 contributes to the Mn(2+) binding site. Position 91 (E91) interacts with Mg(2+). Positions 118 and 120 each coordinate Mn(2+). E120 is a catalytic residue.

This sequence belongs to the IPP isomerase type 1 family. Requires Mg(2+) as cofactor. It depends on Mn(2+) as a cofactor.

The protein resides in the cytoplasm. It carries out the reaction isopentenyl diphosphate = dimethylallyl diphosphate. Its pathway is isoprenoid biosynthesis; dimethylallyl diphosphate biosynthesis; dimethylallyl diphosphate from isopentenyl diphosphate: step 1/1. Functionally, catalyzes the 1,3-allylic rearrangement of the homoallylic substrate isopentenyl (IPP) to its highly electrophilic allylic isomer, dimethylallyl diphosphate (DMAPP). The sequence is that of Isopentenyl-diphosphate Delta-isomerase from Mycolicibacterium vanbaalenii (strain DSM 7251 / JCM 13017 / BCRC 16820 / KCTC 9966 / NRRL B-24157 / PYR-1) (Mycobacterium vanbaalenii).